The primary structure comprises 625 residues: Probable potassium transport system protein Kup (625 aa).

12 helical membrane passes run 10–30 (LAAL…TSPL), 50–70 (LLGV…LKYV), 102–122 (YFPL…DSVI), 142–162 (FDPY…SVQA), 172–192 (FGPI…VNII), 215–235 (FLAF…EALY), 250–270 (WFLV…ALLL), 284–304 (LGAW…IIAS), 340–360 (IYIP…VVGF), 369–389 (AYGI…FFVI), 397–417 (LLLC…LFSA), and 422–442 (LFHG…LMLT).

The protein belongs to the HAK/KUP transporter (TC 2.A.72) family.

The protein resides in the cell inner membrane. The enzyme catalyses K(+)(in) + H(+)(in) = K(+)(out) + H(+)(out). Its function is as follows. Transport of potassium into the cell. Likely operates as a K(+):H(+) symporter. The protein is Probable potassium transport system protein Kup of Janthinobacterium sp. (strain Marseille) (Minibacterium massiliensis).